Consider the following 273-residue polypeptide: Shikimate dehydrogenase (NADP(+)) (273 aa).

Shikimate is bound by residues 18 to 20 (SKS) and threonine 65. The active-site Proton acceptor is the lysine 69. Glutamate 81 provides a ligand contact to NADP(+). The shikimate site is built by asparagine 90 and aspartate 105. Residues 130 to 134 (GAGGA), 154 to 159 (NRTHSK), and methionine 217 each bind NADP(+). Residue tyrosine 219 coordinates shikimate. Position 240 (glycine 240) interacts with NADP(+).

Belongs to the shikimate dehydrogenase family. As to quaternary structure, homodimer.

The catalysed reaction is shikimate + NADP(+) = 3-dehydroshikimate + NADPH + H(+). The protein operates within metabolic intermediate biosynthesis; chorismate biosynthesis; chorismate from D-erythrose 4-phosphate and phosphoenolpyruvate: step 4/7. Functionally, involved in the biosynthesis of the chorismate, which leads to the biosynthesis of aromatic amino acids. Catalyzes the reversible NADPH linked reduction of 3-dehydroshikimate (DHSA) to yield shikimate (SA). In Janthinobacterium sp. (strain Marseille) (Minibacterium massiliensis), this protein is Shikimate dehydrogenase (NADP(+)).